The primary structure comprises 61 residues: Insect toxin BsIT3 (61 aa).

In terms of domain architecture, LCN-type CS-alpha/beta spans 1-61 (DGYILNSKGC…RWTSSKNKCN (61 aa)). 4 disulfide bridges follow: C10-C60, C14-C35, C21-C42, and C25-C44.

The protein belongs to the long (4 C-C) scorpion toxin superfamily. Sodium channel inhibitor family. Beta subfamily. Expressed by the venom gland.

It localises to the secreted. Its function is as follows. Depressant insect beta-toxins cause a transient contraction paralysis followed by a slow flaccid paralysis. They bind voltage-independently at site-4 of sodium channels (Nav) and shift the voltage of activation toward more negative potentials thereby affecting sodium channel activation and promoting spontaneous and repetitive firing. This toxin is active only on insects. In Hottentotta tamulus sindicus (Scorpion), this protein is Insect toxin BsIT3.